The sequence spans 343 residues: Ricin B-like lectin R40G2 (343 aa).

A Ricin B-type lectin domain is found at 194–340; it reads TVRVFSAAGE…CEGDNQRWKI (147 aa).

Lectin which binds carbohydrates in vitro. Interacts through its lectin domain with glycan structures containing specific motifs. The sequence is that of Ricin B-like lectin R40G2 from Oryza sativa subsp. japonica (Rice).